Consider the following 353-residue polypeptide: Probable peptide ABC transporter ATP-binding protein y4tS (353 aa).

The ABC transporter domain occupies 6–256; sequence LKVESLTKHY…PVHPYTEALI (251 aa). 49-56 is a binding site for ATP; sequence GESGCGKS.

The protein belongs to the ABC transporter superfamily.

It is found in the cell inner membrane. Functionally, probably part of a binding-protein-dependent transport system y4tOPQRS for a peptide. Probably responsible for energy coupling to the transport system. The protein is Probable peptide ABC transporter ATP-binding protein y4tS of Sinorhizobium fredii (strain NBRC 101917 / NGR234).